The primary structure comprises 1156 residues: Reverse gyrase 1 (1156 aa).

Residues 1-38 (MLKVYYTFGCPNCGGPIDDEHLLAGVPCSKCLPGRVEN) form an RG N-terminal-type zinc finger. Zn(2+) contacts are provided by Cys-10, Cys-13, Cys-28, and Cys-31. ATP is bound by residues Gln-86 and 103–110 (APTGLGKT). One can recognise a Helicase ATP-binding domain in the interval 90-277 (IKRLAKSESF…ALRTLIGFEP (188 aa)). Residues 184-187 (DDSD) carry the DEAD box motif. The topoisomerase I stretch occupies residues 570 to 1156 (INIKTILLIV…VNSLKLDTNV (587 aa)). The region spanning 574–736 (TILLIVESPT…NIYRIKYHEI (163 aa)) is the Toprim domain. Glu-580 provides a ligand contact to Mg(2+). The segment at 655–682 (IYKCYNCGKTFTIKSNTCPYCGSVFISS) adopts an RG C-terminal-type zinc-finger fold. Positions 658, 661, 672, and 675 each coordinate Zn(2+). Asp-705 lines the Mg(2+) pocket. Residues 752-1143 (NMNLVKSQIV…DLHKEITQIS (392 aa)) form the Topo IA-type catalytic domain. Tyr-895 (O-(5'-phospho-DNA)-tyrosine intermediate) is an active-site residue.

This sequence in the N-terminal section; belongs to the DEAD box helicase family. DDVD subfamily. The protein in the C-terminal section; belongs to the type IA topoisomerase family. As to quaternary structure, monomer. The cofactor is Zn(2+). It depends on Mg(2+) as a cofactor.

It is found in the cytoplasm. It catalyses the reaction ATP + H2O = ADP + phosphate + H(+). In terms of biological role, modifies the topological state of DNA by introducing positive supercoils in an ATP-dependent process, increasing the linking number in steps of +1. Binds to single-stranded DNA, transiently cleaves and then rejoins the ends, introducing a positive supercoil in the process. The scissile phosphodiester is attacked by the catalytic tyrosine of the enzyme, resulting in the formation of a DNA-(5'-phosphotyrosyl)-enzyme intermediate. Probably involved in rewinding DNA strands in regions of the chromosome that have opened up to allow replication, transcription, DNA repair and/or for DNA protection. The chain is Reverse gyrase 1 from Sulfurisphaera tokodaii (strain DSM 16993 / JCM 10545 / NBRC 100140 / 7) (Sulfolobus tokodaii).